The following is a 379-amino-acid chain: Cytochrome b (379 aa).

A run of 4 helical transmembrane segments spans residues 33–53 (FGSL…FLAM), 77–98 (WLIR…YLHI), 113–133 (WNIG…GYVL), and 178–198 (FFAF…IHLL). Heme b-binding residues include histidine 83 and histidine 97. Heme b-binding residues include histidine 182 and histidine 196. Histidine 201 provides a ligand contact to a ubiquinone. A run of 4 helical transmembrane segments spans residues 226–246 (YKDL…ALFY), 288–308 (LGGV…PILH), 320–340 (ASQL…WIGG), and 347–367 (YIII…VLNP).

It belongs to the cytochrome b family. The cytochrome bc1 complex contains 3 respiratory subunits (MT-CYB, CYC1 and UQCRFS1), 2 core proteins (UQCRC1 and UQCRC2) and probably 6 low-molecular weight proteins. The cofactor is heme b.

It localises to the mitochondrion inner membrane. In terms of biological role, component of the ubiquinol-cytochrome c reductase complex (complex III or cytochrome b-c1 complex) that is part of the mitochondrial respiratory chain. The b-c1 complex mediates electron transfer from ubiquinol to cytochrome c. Contributes to the generation of a proton gradient across the mitochondrial membrane that is then used for ATP synthesis. The chain is Cytochrome b (mt-cyb) from Anguilla dieffenbachii (New Zealand longfin eel).